The following is a 552-amino-acid chain: Chaperonin GroEL (552 aa).

ATP contacts are provided by residues 29 to 32 (TAGP), K50, 86 to 90 (DGTTT), G420, and D501.

The protein belongs to the chaperonin (HSP60) family. As to quaternary structure, forms a cylinder of 14 subunits composed of two heptameric rings stacked back-to-back. Interacts with the co-chaperonin GroES.

It localises to the cytoplasm. It carries out the reaction ATP + H2O + a folded polypeptide = ADP + phosphate + an unfolded polypeptide.. Its function is as follows. Together with its co-chaperonin GroES, plays an essential role in assisting protein folding. The GroEL-GroES system forms a nano-cage that allows encapsulation of the non-native substrate proteins and provides a physical environment optimized to promote and accelerate protein folding. The chain is Chaperonin GroEL from Wolbachia pipientis subsp. Culex pipiens (strain wPip).